The primary structure comprises 739 residues: Xylosyl- and glucuronyltransferase LARGE2s (739 aa).

The Cytoplasmic portion of the chain corresponds to 1 to 10 (MLCSWRVKLK). A helical; Signal-anchor for type II membrane protein membrane pass occupies residues 11–31 (LLLATITLAVLLSWLYLFVGS). Residues 32–739 (LEYGRFLLLP…LKYLTAERNL (708 aa)) lie on the Lumenal side of the membrane. The interval 80–105 (AEGSDGNPQWAASAEDGPPLGGERNN) is disordered. N-linked (GlcNAc...) asparagine glycosylation is found at asparagine 105, asparagine 131, and asparagine 217. Residues 121–396 (LHVAIVCAGH…FLEYDGNLLR (276 aa)) are xylosyltransferase activity. 2 residues coordinate Mn(2+): aspartate 225 and aspartate 227. A glycan (N-linked (GlcNAc...) asparagine) is linked at asparagine 255. The interval 397–739 (RELFGCASLP…LKYLTAERNL (343 aa)) is glucuronyltransferase activity. Residues aspartate 546 and aspartate 548 each coordinate Mn(2+).

In the C-terminal section; belongs to the glycosyltransferase 49 family. It in the N-terminal section; belongs to the glycosyltransferase 8 family. The cofactor is Mn(2+).

The protein resides in the golgi apparatus membrane. The enzyme catalyses 3-O-[beta-D-GlcA-(1-&gt;3)-beta-D-Xyl-(1-&gt;4)-Rib-ol-P-Rib-ol-P-3-beta-D-GalNAc-(1-&gt;3)-beta-D-GlcNAc-(1-&gt;4)-(O-6-P-alpha-D-Man)]-Thr-[protein] + UDP-alpha-D-xylose = 3-O-[alpha-D-Xyl-(1-&gt;3)-beta-D-GlcA-(1-&gt;4)-beta-D-Xyl-(1-&gt;4)-Rib-ol-P-Rib-ol-P-3-beta-D-GalNAc-(1-&gt;3)-beta-D-GlcNAc-(1-&gt;4)-(O-6-P-alpha-D-Man)]-Thr-[protein] + UDP + H(+). The catalysed reaction is 3-O-{(1-&gt;[3)-alpha-D-Xyl-(1-&gt;3)-beta-D-GlcA-(1-&gt;](n)-4)-beta-D-Xyl-(1-&gt;4)-Rib-ol-P-Rib-ol-P-3-beta-D-GalNAc-(1-&gt;3)-beta-D-GlcNAc-(1-&gt;4)-O-6-P-alpha-D-Man}-L-Thr-[protein] + UDP-alpha-D-glucuronate = 3-O-{beta-D-GlcA-(1-&gt;[3)-alpha-D-Xyl-(1-&gt;3)-beta-D-GlcA-(1-&gt;](n)-4)-beta-D-Xyl-(1-&gt;4)-Rib-ol-P-Rib-ol-P-3-beta-D-GalNAc-(1-&gt;3)-beta-D-GlcNAc-(1-&gt;4)-O-6-P-alpha-D-Man}-L-Thr-[protein] + UDP + H(+). It carries out the reaction 3-O-{beta-D-GlcA-(1-&gt;[3)-alpha-D-Xyl-(1-&gt;3)-beta-D-GlcA-(1-&gt;](n)-4)-beta-D-Xyl-(1-&gt;4)-Rib-ol-P-Rib-ol-P-3-beta-D-GalNAc-(1-&gt;3)-beta-D-GlcNAc-(1-&gt;4)-O-6-P-alpha-D-Man}-L-Thr-[protein] + UDP-alpha-D-xylose = 3-O-{(1-&gt;[3)-alpha-D-Xyl-(1-&gt;3)-beta-D-GlcA-(1-&gt;](n+1)-4)-beta-D-Xyl-(1-&gt;4)-Rib-ol-P-Rib-ol-P-3-beta-D-GalNAc-(1-&gt;3)-beta-D-GlcNAc-(1-&gt;4)-O-6-P-alpha-D-Man}-L-Thr-[protein] + UDP + H(+). Its pathway is protein modification; protein glycosylation. Its function is as follows. Bifunctional glycosyltransferase with both alpha-1,3-xylosyltransferase and beta-1,3-glucuronyltransferase activities involved in the maturation of alpha-dystroglycan (DAG1) by glycosylation leading to DAG1 binding to laminin G-like domain-containing extracellular proteins with high affinity and in a phosphorylated-O-mannosyl trisaccharide dependent manner. Elongates the glucuronyl-beta-1,4-xylose-beta disaccharide primer structure by adding repeating units [-3-Xylose-alpha-1,3-GlcA-beta-1-] to produce a heteropolysaccharide. Supports the maturation of DAG1 more effectively than LARGE1. In addition, can modify both heparan sulfate (HS)- and chondroitin/dermatan sulfate (CS/DS)-proteoglycans (PGs), namely GPC4, with a glycosaminoglycan (GAG)-like polysaccharide composed of xylose and glucuronic acid to confer laminin binding. The polypeptide is Xylosyl- and glucuronyltransferase LARGE2s (Gallus gallus (Chicken)).